A 1005-amino-acid chain; its full sequence is Beta-galactosidase (1005 aa).

Catalysis depends on E455, which acts as the Proton donor. The Nucleophile role is filled by E526.

This sequence belongs to the glycosyl hydrolase 2 family.

It carries out the reaction Hydrolysis of terminal non-reducing beta-D-galactose residues in beta-D-galactosides.. The sequence is that of Beta-galactosidase (lacZ) from Actinobacillus pleuropneumoniae (Haemophilus pleuropneumoniae).